The chain runs to 773 residues: 5-methyltetrahydropteroyltriglutamate--homocysteine methyltransferase (773 aa).

5-methyltetrahydropteroyltri-L-glutamate contacts are provided by residues 16–19 (RELK) and K116. L-homocysteine contacts are provided by residues 437-439 (IGS) and E490. L-methionine is bound by residues 437–439 (IGS) and E490. Residues 521–522 (RC) and W567 contribute to the 5-methyltetrahydropteroyltri-L-glutamate site. Residue D605 coordinates L-homocysteine. L-methionine is bound at residue D605. E611 lines the 5-methyltetrahydropteroyltri-L-glutamate pocket. Zn(2+)-binding residues include H647, C649, and E671. The Proton donor role is filled by H700. Zn(2+) is bound at residue C732.

This sequence belongs to the vitamin-B12 independent methionine synthase family. Zn(2+) serves as cofactor.

It carries out the reaction 5-methyltetrahydropteroyltri-L-glutamate + L-homocysteine = tetrahydropteroyltri-L-glutamate + L-methionine. It participates in amino-acid biosynthesis; L-methionine biosynthesis via de novo pathway; L-methionine from L-homocysteine (MetE route): step 1/1. In terms of biological role, catalyzes the transfer of a methyl group from 5-methyltetrahydrofolate to homocysteine resulting in methionine formation. In Alkalilimnicola ehrlichii (strain ATCC BAA-1101 / DSM 17681 / MLHE-1), this protein is 5-methyltetrahydropteroyltriglutamate--homocysteine methyltransferase.